A 490-amino-acid polypeptide reads, in one-letter code: Cobyric acid synthase (490 aa).

In terms of domain architecture, GATase cobBQ-type spans 252–439 (RLKVVVPVLP…LHGLFESTAA (188 aa)). Cys333 acts as the Nucleophile in catalysis. Residue His431 is part of the active site.

The protein belongs to the CobB/CobQ family. CobQ subfamily.

The protein operates within cofactor biosynthesis; adenosylcobalamin biosynthesis. In terms of biological role, catalyzes amidations at positions B, D, E, and G on adenosylcobyrinic A,C-diamide. NH(2) groups are provided by glutamine, and one molecule of ATP is hydrogenolyzed for each amidation. In Pseudomonas aeruginosa (strain LESB58), this protein is Cobyric acid synthase.